The primary structure comprises 375 residues: Alcohol dehydrogenase class-3 chain H (375 aa).

N-acetylalanine is present on A1. Zn(2+) contacts are provided by C46, H68, C98, C101, C104, C112, and C175.

Belongs to the zinc-containing alcohol dehydrogenase family. Class-III subfamily. In terms of assembly, homodimer or heterodimer with L chain. It depends on Zn(2+) as a cofactor.

Its subcellular location is the cytoplasm. It catalyses the reaction a primary alcohol + NAD(+) = an aldehyde + NADH + H(+). The enzyme catalyses a secondary alcohol + NAD(+) = a ketone + NADH + H(+). It carries out the reaction S-(hydroxymethyl)glutathione + NADP(+) = S-formylglutathione + NADPH + H(+). The catalysed reaction is S-(hydroxymethyl)glutathione + NAD(+) = S-formylglutathione + NADH + H(+). Its function is as follows. Class-III ADH is remarkably ineffective in oxidizing ethanol, but it readily catalyzes the oxidation of long-chain primary alcohols and the oxidation of S-(hydroxymethyl) glutathione. The protein is Alcohol dehydrogenase class-3 chain H of Gadus morhua (Atlantic cod).